Consider the following 281-residue polypeptide: ATP phosphoribosyltransferase (281 aa).

It belongs to the ATP phosphoribosyltransferase family. Long subfamily. It depends on Mg(2+) as a cofactor.

The protein localises to the cytoplasm. The enzyme catalyses 1-(5-phospho-beta-D-ribosyl)-ATP + diphosphate = 5-phospho-alpha-D-ribose 1-diphosphate + ATP. It participates in amino-acid biosynthesis; L-histidine biosynthesis; L-histidine from 5-phospho-alpha-D-ribose 1-diphosphate: step 1/9. Feedback inhibited by histidine. Its function is as follows. Catalyzes the condensation of ATP and 5-phosphoribose 1-diphosphate to form N'-(5'-phosphoribosyl)-ATP (PR-ATP). Has a crucial role in the pathway because the rate of histidine biosynthesis seems to be controlled primarily by regulation of HisG enzymatic activity. This Salinispora tropica (strain ATCC BAA-916 / DSM 44818 / JCM 13857 / NBRC 105044 / CNB-440) protein is ATP phosphoribosyltransferase.